Consider the following 719-residue polypeptide: Pesticidal crystal protein Cry1Ia (719 aa).

Belongs to the delta endotoxin family.

Promotes colloidosmotic lysis by binding to the midgut epithelial cells of certain coleopteran and lepidopteran species. Active on Plutella xylostella and Bombyx mori. This chain is Pesticidal crystal protein Cry1Ia (cry1Ia), found in Bacillus thuringiensis subsp. kurstaki.